The primary structure comprises 191 residues: Molybdenum cofactor guanylyltransferase (191 aa).

Residues 13-15 (LAG), Lys-26, Asp-72, and Asp-102 contribute to the GTP site. Mg(2+) is bound at residue Asp-102.

Belongs to the MobA family. As to quaternary structure, monomer. It depends on Mg(2+) as a cofactor.

It localises to the cytoplasm. The enzyme catalyses Mo-molybdopterin + GTP + H(+) = Mo-molybdopterin guanine dinucleotide + diphosphate. Its function is as follows. Transfers a GMP moiety from GTP to Mo-molybdopterin (Mo-MPT) cofactor (Moco or molybdenum cofactor) to form Mo-molybdopterin guanine dinucleotide (Mo-MGD) cofactor. The sequence is that of Molybdenum cofactor guanylyltransferase from Pseudomonas entomophila (strain L48).